Reading from the N-terminus, the 562-residue chain is Nucleoprotein (562 aa).

The tract at residues 54-237 is binding site for the cap structure m7GTP; that stretch reads LRKTKRTDGD…ITKDESAINI (184 aa). Residues Asp381 and Glu383 each contribute to the Mn(2+) site. Positions 391, 498, 501, and 523 each coordinate Zn(2+). Position 527 (Asp527) interacts with Mn(2+).

Belongs to the arenaviridae nucleocapsid protein family. In terms of assembly, homomultimerizes to form the nucleocapsid. Binds to viral genomic RNA. Interacts with glycoprotein G2. Interacts with protein Z; this interaction probably directs the encapsidated genome to budding sites. Interacts with protein L; this interaction does not interfere with Z-L interaction. Interacts with host IKBKE (via Protein kinase domain); the interaction inhibits IKBKE kinase activity.

Its subcellular location is the virion. The protein resides in the host cytoplasm. In terms of biological role, encapsidates the genome, protecting it from nucleases. The encapsidated genomic RNA is termed the nucleocapsid (NC). Serves as template for viral transcription and replication. The increased presence of protein N in host cell does not seem to trigger the switch from transcription to replication as observed in other negative strain RNA viruses. Through the interaction with host IKBKE, strongly inhibits the phosphorylation and nuclear translocation of host IRF3, a protein involved in interferon activation pathway, leading to the inhibition of interferon-beta and IRF3-dependent promoters activation. Also encodes a functional 3'-5' exoribonuclease that degrades preferentially dsRNA substrates and thereby participates in the suppression of interferon induction. The protein is Nucleoprotein of Homo sapiens (Human).